A 36-amino-acid polypeptide reads, in one-letter code: Fructose-1,6-/sedoheptulose-1,7-bisphosphate aldolase (36 aa).

This is Fructose-1,6-/sedoheptulose-1,7-bisphosphate aldolase (cbbA) from Nitrobacter vulgaris.